A 451-amino-acid chain; its full sequence is Methylenetetrahydrofolate--tRNA-(uracil-5-)-methyltransferase TrmFO (451 aa).

18–23 (GGGLAG) is an FAD binding site.

Belongs to the MnmG family. TrmFO subfamily. FAD is required as a cofactor.

The protein resides in the cytoplasm. It carries out the reaction uridine(54) in tRNA + (6R)-5,10-methylene-5,6,7,8-tetrahydrofolate + NADH + H(+) = 5-methyluridine(54) in tRNA + (6S)-5,6,7,8-tetrahydrofolate + NAD(+). The enzyme catalyses uridine(54) in tRNA + (6R)-5,10-methylene-5,6,7,8-tetrahydrofolate + NADPH + H(+) = 5-methyluridine(54) in tRNA + (6S)-5,6,7,8-tetrahydrofolate + NADP(+). Its function is as follows. Catalyzes the folate-dependent formation of 5-methyl-uridine at position 54 (M-5-U54) in all tRNAs. The protein is Methylenetetrahydrofolate--tRNA-(uracil-5-)-methyltransferase TrmFO of Synechococcus sp. (strain JA-3-3Ab) (Cyanobacteria bacterium Yellowstone A-Prime).